The primary structure comprises 290 residues: Acetylglutamate kinase (290 aa).

Substrate-binding positions include 65-66 (GG), arginine 87, and asparagine 186.

This sequence belongs to the acetylglutamate kinase family. ArgB subfamily.

It is found in the cytoplasm. It catalyses the reaction N-acetyl-L-glutamate + ATP = N-acetyl-L-glutamyl 5-phosphate + ADP. The protein operates within amino-acid biosynthesis; L-arginine biosynthesis; N(2)-acetyl-L-ornithine from L-glutamate: step 2/4. Functionally, catalyzes the ATP-dependent phosphorylation of N-acetyl-L-glutamate. The chain is Acetylglutamate kinase from Mycolicibacterium gilvum (strain PYR-GCK) (Mycobacterium gilvum (strain PYR-GCK)).